The sequence spans 126 residues: Lymphocyte antigen 6E (126 aa).

An N-terminal signal peptide occupies residues 1-20 (MKAFLFAVLAAVLCVERAHT). A UPAR/Ly6 domain is found at 21 to 98 (LICFSCSDAS…CCDSFLCNIS (78 aa)). Intrachain disulfides connect cysteine 23-cysteine 48, cysteine 26-cysteine 35, cysteine 41-cysteine 69, cysteine 73-cysteine 89, and cysteine 90-cysteine 95. N-linked (GlcNAc...) asparagine glycosylation is present at asparagine 96. A lipid anchor (GPI-anchor amidated serine) is attached at serine 98. The propeptide at 99 to 126 (GSSSVKASYAVLALGILVSFVYVLRARE) is removed in mature form.

In terms of tissue distribution, expressed by thymic blast cells.

Its subcellular location is the cell membrane. This Gallus gallus (Chicken) protein is Lymphocyte antigen 6E (LY6E).